Consider the following 194-residue polypeptide: Myelin-associated neurite-outgrowth inhibitor (194 aa).

N-acetylmethionine is present on methionine 1. At 1–18 (MNPVYSPGSSGVPYANAK) the chain is on the cytoplasmic side. Position 6 is a phosphoserine (serine 6). A helical membrane pass occupies residues 19–41 (GIGYPAGFPVGYAAAPAYSPNMY). Residues 42–141 (PGANPTFQTG…PAPIPPPRGS (100 aa)) lie on the Extracellular side of the membrane. Asparagine 45 carries an N-linked (GlcNAc...) asparagine glycan. A helical transmembrane segment spans residues 142-163 (GVTMGMVAGTTMAMSAGTLLTA). The Cytoplasmic segment spans residues 164-194 (HSPTPVAPHPVTVPTYRAPGTPTYSYVPPQW).

It belongs to the FAM168 family. As to quaternary structure, may form homodimers. May interact with DAZAP2, FAM168A, PRDX6, RBM6, TMTC1 and YPEL2. Interacts with CDC27. Post-translationally, N-glycosylated. As to expression, predominantly expressed in the brain, including olfactory bulb, cortex and cerebellum (at protein level).

It is found in the cytoplasm. The protein resides in the perinuclear region. Its subcellular location is the cell membrane. It localises to the cell projection. The protein localises to the axon. Inhibitor of neuronal axonal outgrowth. Acts as a negative regulator of CDC42 and STAT3 and a positive regulator of STMN2. Positive regulator of CDC27. The protein is Myelin-associated neurite-outgrowth inhibitor (Fam168b) of Mus musculus (Mouse).